A 247-amino-acid chain; its full sequence is Carboxy-S-adenosyl-L-methionine synthase (247 aa).

S-adenosyl-L-methionine-binding positions include tyrosine 39, 64-66 (GCS), 89-90 (DN), 117-118 (DI), asparagine 132, and arginine 199.

Belongs to the class I-like SAM-binding methyltransferase superfamily. Cx-SAM synthase family. Homodimer.

The catalysed reaction is prephenate + S-adenosyl-L-methionine = carboxy-S-adenosyl-L-methionine + 3-phenylpyruvate + H2O. Catalyzes the conversion of S-adenosyl-L-methionine (SAM) to carboxy-S-adenosyl-L-methionine (Cx-SAM). This Escherichia coli O127:H6 (strain E2348/69 / EPEC) protein is Carboxy-S-adenosyl-L-methionine synthase.